The chain runs to 319 residues: Acetyl-coenzyme A carboxylase carboxyl transferase subunit alpha (319 aa).

The 256-residue stretch at 38-293 folds into the CoA carboxyltransferase C-terminal domain; sequence HALQDKLRLR…KAVLLNELDA (256 aa).

Belongs to the AccA family. As to quaternary structure, acetyl-CoA carboxylase is a heterohexamer composed of biotin carboxyl carrier protein (AccB), biotin carboxylase (AccC) and two subunits each of ACCase subunit alpha (AccA) and ACCase subunit beta (AccD).

The protein resides in the cytoplasm. The enzyme catalyses N(6)-carboxybiotinyl-L-lysyl-[protein] + acetyl-CoA = N(6)-biotinyl-L-lysyl-[protein] + malonyl-CoA. Its pathway is lipid metabolism; malonyl-CoA biosynthesis; malonyl-CoA from acetyl-CoA: step 1/1. Component of the acetyl coenzyme A carboxylase (ACC) complex. First, biotin carboxylase catalyzes the carboxylation of biotin on its carrier protein (BCCP) and then the CO(2) group is transferred by the carboxyltransferase to acetyl-CoA to form malonyl-CoA. This chain is Acetyl-coenzyme A carboxylase carboxyl transferase subunit alpha, found in Stenotrophomonas maltophilia (strain R551-3).